A 156-amino-acid polypeptide reads, in one-letter code: Myosin regulatory light chain B, smooth adductor muscle (156 aa).

Ala1 carries the blocked amino end (Ala) modification. EF-hand domains lie at 15-50 (KQIQ…LGRT) and 84-119 (DTEE…MGDN). Residues Asp28, Asn30, Asp32, and Asp39 each contribute to the Ca(2+) site.

In terms of biological role, in molluscan muscle, calcium regulation is associated with myosin rather than with actin. Muscle myosin contains two types of light chains: the catalytic light chain, essential for ATPase activity, and the regulatory light chain, a calcium-binding protein responsible for Ca(2+) dependent binding and Ca(2+) dependent Mg-ATPase activity. The polypeptide is Myosin regulatory light chain B, smooth adductor muscle (Mizuhopecten yessoensis (Japanese scallop)).